A 160-amino-acid chain; its full sequence is UPF0262 protein ELI_10965 (160 aa).

The protein belongs to the UPF0262 family.

This Erythrobacter litoralis (strain HTCC2594) protein is UPF0262 protein ELI_10965.